A 370-amino-acid chain; its full sequence is MTSLPPGTTGDPDLFSGPSPAGSTPANQSAEASESNVSATVPRAAAVTPFQSLQLVHQLKGLIVMLYSIVVVVGLVGNCLLVLVIARVRRLHNVTNFLIGNLALSDVLMCAACVPLTLAYAFEPRGWVFGGGLCHLVFFLQPVTVYVSVFTLTTIAVDRYVVLVHPLRRRISLKLSAYAVLGIWALSAVLALPAAVHTYHVELKPHDVRLCEEFWGSQERQRQIYAWGLLLGTYLLPLLAILLSYVRVSVKLRNRVVPGSVTQSQADWDRARRRRTFCLLVVVVVVFALCWLPLHIFNLLRDLDPRAIDPYAFGLVQLLCHWLAMSSACYNPFIYAWLHDSFREELRKMLLSWPRKIVPHGQNMTVSVVI.

The disordered stretch occupies residues 1 to 34 (MTSLPPGTTGDPDLFSGPSPAGSTPANQSAEASE). Residues 1–62 (MTSLPPGTTG…LQLVHQLKGL (62 aa)) are Extracellular-facing. Over residues 21–34 (AGSTPANQSAEASE) the composition is skewed to polar residues. N-linked (GlcNAc...) asparagine glycosylation is found at asparagine 27 and asparagine 36. A helical transmembrane segment spans residues 63-83 (IVMLYSIVVVVGLVGNCLLVL). Over 84-101 (VIARVRRLHNVTNFLIGN) the chain is Cytoplasmic. The helical transmembrane segment at 102–122 (LALSDVLMCAACVPLTLAYAF) threads the bilayer. Topologically, residues 123–126 (EPRG) are extracellular. Residues 127-147 (WVFGGGLCHLVFFLQPVTVYV) traverse the membrane as a helical segment. Cysteine 134 and cysteine 211 are disulfide-bonded. The Cytoplasmic segment spans residues 148 to 175 (SVFTLTTIAVDRYVVLVHPLRRRISLKL). Residues 176 to 196 (SAYAVLGIWALSAVLALPAAV) form a helical membrane-spanning segment. Over 197 to 223 (HTYHVELKPHDVRLCEEFWGSQERQRQ) the chain is Extracellular. The helical transmembrane segment at 224-244 (IYAWGLLLGTYLLPLLAILLS) threads the bilayer. Residues 245-276 (YVRVSVKLRNRVVPGSVTQSQADWDRARRRRT) lie on the Cytoplasmic side of the membrane. Residues 277–297 (FCLLVVVVVVFALCWLPLHIF) traverse the membrane as a helical segment. At 298–317 (NLLRDLDPRAIDPYAFGLVQ) the chain is on the extracellular side. A helical transmembrane segment spans residues 318–338 (LLCHWLAMSSACYNPFIYAWL). The Cytoplasmic segment spans residues 339 to 370 (HDSFREELRKMLLSWPRKIVPHGQNMTVSVVI). Residues 365–370 (TVSVVI) are required for interaction with GRIP1, GRIP2 and PICK1.

Belongs to the G-protein coupled receptor 1 family. Interacts through its C-terminal region with the PDZ domain-containing proteins GRIP1, GRIP2 and PICK1. Interacts with PDZ domains 4 and 5 of GRIP1 and with the PDZ domain of PICK1. In terms of tissue distribution, widely expressed, with highest levels in pituitary, cerebellum, and hypothalamus.

Its subcellular location is the cell membrane. Its function is as follows. Receptor for prolactin-releasing peptide (PrRP). Implicated in lactation, regulation of food intake and pain-signal processing. The polypeptide is Prolactin-releasing peptide receptor (Prlhr) (Rattus norvegicus (Rat)).